The primary structure comprises 300 residues: 33 kDa chaperonin (300 aa).

2 disulfide bridges follow: C235/C237 and C269/C272.

Belongs to the HSP33 family. Under oxidizing conditions two disulfide bonds are formed involving the reactive cysteines. Under reducing conditions zinc is bound to the reactive cysteines and the protein is inactive.

Its subcellular location is the cytoplasm. Its function is as follows. Redox regulated molecular chaperone. Protects both thermally unfolding and oxidatively damaged proteins from irreversible aggregation. Plays an important role in the bacterial defense system toward oxidative stress. This chain is 33 kDa chaperonin, found in Pseudomonas savastanoi pv. phaseolicola (strain 1448A / Race 6) (Pseudomonas syringae pv. phaseolicola (strain 1448A / Race 6)).